A 146-amino-acid polypeptide reads, in one-letter code: Hemoglobin subunit beta-2 (146 aa).

The Globin domain occupies 2 to 146 (KWTDKERAVI…VVSALGKQYC (145 aa)). The heme b site is built by His-63 and His-92.

Belongs to the globin family. In terms of assembly, heterotetramer of two alpha chains and two beta chains. Red blood cells.

Its function is as follows. Involved in oxygen transport from gills to the various peripheral tissues. The sequence is that of Hemoglobin subunit beta-2 (hbb2) from Lycodes reticulatus (Arctic eelpout).